The sequence spans 432 residues: Adenylosuccinate synthetase (432 aa).

GTP is bound by residues 13–19 and 41–43; these read GDEGKGK and GHT. Residue Asp-14 is the Proton acceptor of the active site. The Mg(2+) site is built by Asp-14 and Gly-41. IMP contacts are provided by residues 14 to 17, 39 to 42, Thr-130, Arg-144, Gln-225, Thr-240, and Arg-304; these read DEGK and NAGH. The Proton donor role is filled by His-42. 300–306 serves as a coordination point for substrate; it reads ATTGRKR. Residues Arg-306, 332–334, and 415–417 each bind GTP; these read KLD and STG.

Belongs to the adenylosuccinate synthetase family. Homodimer. It depends on Mg(2+) as a cofactor.

Its subcellular location is the cytoplasm. The catalysed reaction is IMP + L-aspartate + GTP = N(6)-(1,2-dicarboxyethyl)-AMP + GDP + phosphate + 2 H(+). The protein operates within purine metabolism; AMP biosynthesis via de novo pathway; AMP from IMP: step 1/2. Plays an important role in the de novo pathway of purine nucleotide biosynthesis. Catalyzes the first committed step in the biosynthesis of AMP from IMP. This chain is Adenylosuccinate synthetase, found in Vibrio cholerae serotype O1 (strain M66-2).